Here is a 369-residue protein sequence, read N- to C-terminus: Anhydro-N-acetylmuramic acid kinase (369 aa).

Residue 12–19 participates in ATP binding; the sequence is GTSMDGVD.

The protein belongs to the anhydro-N-acetylmuramic acid kinase family.

The catalysed reaction is 1,6-anhydro-N-acetyl-beta-muramate + ATP + H2O = N-acetyl-D-muramate 6-phosphate + ADP + H(+). It functions in the pathway amino-sugar metabolism; 1,6-anhydro-N-acetylmuramate degradation. The protein operates within cell wall biogenesis; peptidoglycan recycling. Catalyzes the specific phosphorylation of 1,6-anhydro-N-acetylmuramic acid (anhMurNAc) with the simultaneous cleavage of the 1,6-anhydro ring, generating MurNAc-6-P. Is required for the utilization of anhMurNAc either imported from the medium or derived from its own cell wall murein, and thus plays a role in cell wall recycling. The sequence is that of Anhydro-N-acetylmuramic acid kinase from Shewanella amazonensis (strain ATCC BAA-1098 / SB2B).